Reading from the N-terminus, the 440-residue chain is UDP-N-acetylmuramoylalanine--D-glutamate ligase (440 aa).

Residue Gly115–Thr121 participates in ATP binding.

This sequence belongs to the MurCDEF family.

It localises to the cytoplasm. It carries out the reaction UDP-N-acetyl-alpha-D-muramoyl-L-alanine + D-glutamate + ATP = UDP-N-acetyl-alpha-D-muramoyl-L-alanyl-D-glutamate + ADP + phosphate + H(+). It functions in the pathway cell wall biogenesis; peptidoglycan biosynthesis. Functionally, cell wall formation. Catalyzes the addition of glutamate to the nucleotide precursor UDP-N-acetylmuramoyl-L-alanine (UMA). The chain is UDP-N-acetylmuramoylalanine--D-glutamate ligase from Aliivibrio fischeri (strain ATCC 700601 / ES114) (Vibrio fischeri).